Here is a 363-residue protein sequence, read N- to C-terminus: tRNA N6-adenosine threonylcarbamoyltransferase (363 aa).

Positions 127 and 131 each coordinate Fe cation. Substrate contacts are provided by residues 150–154 (LISGG), Asp183, Gly196, and Asn290. Asp318 is a binding site for Fe cation.

Belongs to the KAE1 / TsaD family. The cofactor is Fe(2+).

The protein resides in the cytoplasm. The enzyme catalyses L-threonylcarbamoyladenylate + adenosine(37) in tRNA = N(6)-L-threonylcarbamoyladenosine(37) in tRNA + AMP + H(+). Functionally, required for the formation of a threonylcarbamoyl group on adenosine at position 37 (t(6)A37) in tRNAs that read codons beginning with adenine. Is involved in the transfer of the threonylcarbamoyl moiety of threonylcarbamoyl-AMP (TC-AMP) to the N6 group of A37, together with TsaE and TsaB. TsaD likely plays a direct catalytic role in this reaction. The sequence is that of tRNA N6-adenosine threonylcarbamoyltransferase from Zymomonas mobilis subsp. mobilis (strain ATCC 31821 / ZM4 / CP4).